The following is a 312-amino-acid chain: NADH-ubiquinone oxidoreductase chain 1 (312 aa).

A run of 8 helical transmembrane segments spans residues 3–23 (FILSLIGSLLLIICVLVSVAF), 77–97 (ISPIFSLFLSLFVWMCMPFFV), 104–124 (LGGLFFLCCTSLGVYTVMVAG), 150–170 (LALILLSFVFLIGSYNMVYFF), 174–194 (IYVWFLIILFPMALVWLTISL), 226–246 (LIFMAEYASILFMSMLFCVIF), 250–270 (DVFNLLFYVKLTFISFIFIWA), and 289–309 (CFLSFSLNYLLFFIGFKILLF).

The protein belongs to the complex I subunit 1 family.

Its subcellular location is the mitochondrion inner membrane. The enzyme catalyses a ubiquinone + NADH + 5 H(+)(in) = a ubiquinol + NAD(+) + 4 H(+)(out). Core subunit of the mitochondrial membrane respiratory chain NADH dehydrogenase (Complex I) that is believed to belong to the minimal assembly required for catalysis. Complex I functions in the transfer of electrons from NADH to the respiratory chain. The immediate electron acceptor for the enzyme is believed to be ubiquinone. The chain is NADH-ubiquinone oxidoreductase chain 1 (mt:ND1) from Drosophila subobscura (Fruit fly).